Here is a 149-residue protein sequence, read N- to C-terminus: Calmodulin (149 aa).

N-acetylalanine is present on alanine 2. EF-hand domains follow at residues 8-43 (EQIAEFKEAFSLFDKDGDGTITTKELGTVMRSLGQN), 44-79 (PTEAELQDMINEVDADGNGTIDFPEFLTMMAKKMKD), 81-116 (DSEEEIREAFRVFDKDGNGYISAAELRHVMTNLGEK), and 117-149 (LTDEEVDEMIREADIDGDGQVNYEEFVQMMTAK). Ca(2+) is bound by residues aspartate 21, aspartate 23, aspartate 25, threonine 27, glutamate 32, aspartate 57, aspartate 59, asparagine 61, threonine 63, glutamate 68, aspartate 94, aspartate 96, asparagine 98, tyrosine 100, and glutamate 105. Position 116 is an N6,N6,N6-trimethyllysine (lysine 116). Ca(2+)-binding residues include aspartate 130, aspartate 132, aspartate 134, glutamine 136, and glutamate 141.

This sequence belongs to the calmodulin family.

In terms of biological role, calmodulin acts as part of a calcium signal transduction pathway by mediating the control of a large number of enzymes, ion channels, aquaporins and other proteins through calcium-binding. Calcium-binding is required for the activation of calmodulin. Among the enzymes to be stimulated by the calmodulin-calcium complex are a number of protein kinases, such as myosin light-chain kinases and calmodulin-dependent protein kinase type II (CaMK2), and phosphatases. In Electrophorus electricus (Electric eel), this protein is Calmodulin (calm).